A 77-amino-acid chain; its full sequence is Liver-expressed antimicrobial peptide 2 (77 aa).

Residues 1 to 22 (MWHLKLCAVLMIFLLLLGQTDG) form the signal peptide. The propeptide occupies 23 to 37 (SPIPEVSSAKRRPRR). 2 disulfide bridges follow: C54/C65 and C60/C70.

Belongs to the LEAP2 family.

The protein localises to the secreted. Functionally, has an antimicrobial activity. The chain is Liver-expressed antimicrobial peptide 2 (LEAP2) from Macaca mulatta (Rhesus macaque).